The following is a 343-amino-acid chain: Twinfilin (343 aa).

ADF-H domains follow at residues 4 to 139 (QTGI…KHKI) and 177 to 312 (GINC…EELH). Residues 317–343 (NLRPQFSKPKGPPSRGAKRLTKPQAVE) are disordered.

Belongs to the actin-binding proteins ADF family. Twinfilin subfamily. As to quaternary structure, interacts with G-actin; ADP-actin form.

It localises to the cytoplasm. Its subcellular location is the cytoskeleton. The protein localises to the cell cortex. Its function is as follows. Actin-binding protein involved in motile and morphological processes. Inhibits actin polymerization, likely by sequestering G-actin. The sequence is that of Twinfilin (twf) from Aedes aegypti (Yellowfever mosquito).